We begin with the raw amino-acid sequence, 373 residues long: Glutamate 5-kinase (373 aa).

Lys-16 is a binding site for ATP. Ser-56, Asp-143, and Asn-155 together coordinate substrate. Residue 175 to 176 (TD) participates in ATP binding. The region spanning 281–359 (RGRLTLDDGA…SRIDSLLGYK (79 aa)) is the PUA domain.

It belongs to the glutamate 5-kinase family.

The protein localises to the cytoplasm. It carries out the reaction L-glutamate + ATP = L-glutamyl 5-phosphate + ADP. It participates in amino-acid biosynthesis; L-proline biosynthesis; L-glutamate 5-semialdehyde from L-glutamate: step 1/2. Its function is as follows. Catalyzes the transfer of a phosphate group to glutamate to form L-glutamate 5-phosphate. The chain is Glutamate 5-kinase from Saccharophagus degradans (strain 2-40 / ATCC 43961 / DSM 17024).